Here is a 530-residue protein sequence, read N- to C-terminus: MSGSNGPTDTHTYQSLAEDCPFGSVEQPKRSTGRLVMHSMAMFGREFCYAVEAAYVTPVLLSVGLPKSLYSMVWLLSPILGFLLQPVVGSASDHCRARWGRRRPYILTLAIMMLLGMALYLNGDAVVSALVANPRQKLIWAISITMVGVVLFDFSADFIDGPIKAYLFDVCSHQDKEKGLHYHALFTGFGGALGYILGAIDWVHLDLGRLLGTEFQVMFFFSALVLILCFITHLCSIPEAPLRDAATDPPSQQDPQGSSLSASGMHEYGSIEKVKNGGADTEQPVQEWKNKKPSGQSQRTMSMKSLLRALVNMPSHYRCLCVSHLIGWTAFLSNMLFFTDFMGQIVYHGDPYGAHNSTEFLIYERGVEVGCWGLCINSVFSSVYSYFQKAMVSYIGLKGLYFMGYLLFGLGTGFIGLFPNVYSTLVLCSMFGVMSSTLYTVPFNLIAEYHREEEKEKGQEAPGGPDNQGRGKGVDCAALTCMVQLAQILVGGGLGFLVNMAGSVVVVVITASAVSLIGCCFVALFVRYVD.

Over Met-1 to Arg-45 the chain is Cytoplasmic. A helical membrane pass occupies residues Glu-46–Pro-66. At Lys-67–Ser-68 the chain is on the extracellular side. The chain crosses the membrane as a helical span at residues Leu-69–Gly-89. At Ser-90 to Tyr-105 the chain is on the cytoplasmic side. Residues Ile-106–Val-126 form a helical membrane-spanning segment. Residues Val-127–Leu-138 are Extracellular-facing. Residues Ile-139–Ile-159 traverse the membrane as a helical segment. Over Asp-160–Ala-184 the chain is Cytoplasmic. A helical membrane pass occupies residues Leu-185 to Leu-205. The Extracellular portion of the chain corresponds to Asp-206–Gln-216. A helical transmembrane segment spans residues Val-217–Ile-237. At Pro-238–Arg-318 the chain is on the cytoplasmic side. Residues Lys-275–Arg-299 are disordered. Residues Cys-319–Thr-339 traverse the membrane as a helical segment. At Asp-340–Gly-366 the chain is on the extracellular side. The N-linked (GlcNAc...) asparagine glycan is linked to Asn-356. A helical membrane pass occupies residues Val-367–Phe-387. At Gln-388–Lys-398 the chain is on the cytoplasmic side. A helical membrane pass occupies residues Gly-399–Pro-419. Over Asn-420 to Leu-425 the chain is Extracellular. A helical transmembrane segment spans residues Val-426–Ile-446. The Cytoplasmic portion of the chain corresponds to Ala-447 to Ala-477. A helical transmembrane segment spans residues Ala-478–Val-498. Topologically, residues Asn-499 to Val-504 are extracellular. Residues Val-505 to Phe-525 form a helical membrane-spanning segment. Residues Val-526–Asp-530 are Cytoplasmic-facing.

It belongs to the glycoside-pentoside-hexuronide (GPH) cation symporter transporter (TC 2.A.2) family. Interacts with TYRP1. Mainly expressed in eyeballs and skin melanocytes. Also detected in kidney, colon, gall bladder and pancreas.

The protein resides in the melanosome membrane. It catalyses the reaction sucrose(out) + H(+)(out) = sucrose(in) + H(+)(in). The catalysed reaction is D-glucose(out) + H(+)(out) = D-glucose(in) + H(+)(in). In terms of biological role, proton-associated glucose and sucrose transporter. May be able to transport also fructose. Expressed at a late melanosome maturation stage where functions as a proton/glucose exporter which increase lumenal pH by decreasing glycolysis. Regulates melanogenesis by maintaining melanosome neutralization that is initially initiated by transient OCA2 and required for a proper function of the tyrosinase TYR. The protein is Membrane-associated transporter protein (Slc45a2) of Mus musculus (Mouse).